Here is a 584-residue protein sequence, read N- to C-terminus: Glycosyltransferase family 92 protein Os08g0121900 (584 aa).

A compositionally biased stretch (basic and acidic residues) spans 1-10 (MALAAKERKL). The disordered stretch occupies residues 1-33 (MALAAKERKLSRLGSKGSGGGGGGGSFGARGQR). Residues 16 to 28 (KGSGGGGGGGSFG) show a composition bias toward gly residues. Residues 43–63 (FAAFFAFLFAGAVLFGAAHVI) traverse the membrane as a helical segment. A GT92 domain is found at 314 to 525 (HSMCVCTMLR…DKFSGRVATY (212 aa)).

The protein belongs to the glycosyltransferase 92 family.

Its subcellular location is the membrane. The protein is Glycosyltransferase family 92 protein Os08g0121900 of Oryza sativa subsp. japonica (Rice).